We begin with the raw amino-acid sequence, 490 residues long: Aspartyl/glutamyl-tRNA(Asn/Gln) amidotransferase subunit B (490 aa).

This sequence belongs to the GatB/GatE family. GatB subfamily. As to quaternary structure, heterotrimer of A, B and C subunits.

It carries out the reaction L-glutamyl-tRNA(Gln) + L-glutamine + ATP + H2O = L-glutaminyl-tRNA(Gln) + L-glutamate + ADP + phosphate + H(+). The catalysed reaction is L-aspartyl-tRNA(Asn) + L-glutamine + ATP + H2O = L-asparaginyl-tRNA(Asn) + L-glutamate + ADP + phosphate + 2 H(+). Functionally, allows the formation of correctly charged Asn-tRNA(Asn) or Gln-tRNA(Gln) through the transamidation of misacylated Asp-tRNA(Asn) or Glu-tRNA(Gln) in organisms which lack either or both of asparaginyl-tRNA or glutaminyl-tRNA synthetases. The reaction takes place in the presence of glutamine and ATP through an activated phospho-Asp-tRNA(Asn) or phospho-Glu-tRNA(Gln). The chain is Aspartyl/glutamyl-tRNA(Asn/Gln) amidotransferase subunit B from Methylobacterium nodulans (strain LMG 21967 / CNCM I-2342 / ORS 2060).